We begin with the raw amino-acid sequence, 31 residues long: Photosystem II reaction center protein T (31 aa).

Residues 3-23 traverse the membrane as a helical segment; sequence SLVYIFVFVVALGVLFFAIAF.

It belongs to the PsbT family. As to quaternary structure, PSII is composed of 1 copy each of membrane proteins PsbA, PsbB, PsbC, PsbD, PsbE, PsbF, PsbH, PsbI, PsbJ, PsbK, PsbL, PsbM, PsbT, PsbX, PsbY, PsbZ, Psb30/Ycf12, peripheral proteins PsbO, CyanoQ (PsbQ), PsbU, PsbV and a large number of cofactors. It forms dimeric complexes.

The protein resides in the cellular thylakoid membrane. In terms of biological role, found at the monomer-monomer interface of the photosystem II (PS II) dimer, plays a role in assembly and dimerization of PSII. PSII is a light-driven water plastoquinone oxidoreductase, using light energy to abstract electrons from H(2)O, generating a proton gradient subsequently used for ATP formation. In Synechococcus elongatus (strain ATCC 33912 / PCC 7942 / FACHB-805) (Anacystis nidulans R2), this protein is Photosystem II reaction center protein T.